The chain runs to 21 residues: Bombinin-H4 (21 aa).

Residue I2 is modified to D-allo-isoleucine. I20 carries the isoleucine amide modification.

The protein belongs to the bombinin family. Expressed by the skin glands.

It is found in the secreted. Its function is as follows. Has antimicrobial and hemolytic activities. The protein is Bombinin-H4 of Bombina variegata (Yellow-bellied toad).